Reading from the N-terminus, the 149-residue chain is D-aminoacyl-tRNA deacylase (149 aa).

The Gly-cisPro motif, important for rejection of L-amino acids motif lies at 137–138 (GP).

Belongs to the DTD family. Homodimer.

It localises to the cytoplasm. It carries out the reaction glycyl-tRNA(Ala) + H2O = tRNA(Ala) + glycine + H(+). The catalysed reaction is a D-aminoacyl-tRNA + H2O = a tRNA + a D-alpha-amino acid + H(+). An aminoacyl-tRNA editing enzyme that deacylates mischarged D-aminoacyl-tRNAs. Also deacylates mischarged glycyl-tRNA(Ala), protecting cells against glycine mischarging by AlaRS. Acts via tRNA-based rather than protein-based catalysis; rejects L-amino acids rather than detecting D-amino acids in the active site. By recycling D-aminoacyl-tRNA to D-amino acids and free tRNA molecules, this enzyme counteracts the toxicity associated with the formation of D-aminoacyl-tRNA entities in vivo and helps enforce protein L-homochirality. The chain is D-aminoacyl-tRNA deacylase from Paracoccus denitrificans (strain Pd 1222).